A 738-amino-acid polypeptide reads, in one-letter code: Photosystem I P700 chlorophyll a apoprotein A2 (738 aa).

A run of 8 helical transmembrane segments spans residues 46-69 (LFST…FHIA), 135-158 (LYQG…LHLQ), 175-199 (LNHH…HVAI), 273-291 (IAHH…GHMY), 333-356 (LHFQ…QHMY), 372-398 (AALY…IFFI), 420-442 (AIIS…LYVH), and 521-539 (FLVH…LILV). The [4Fe-4S] cluster site is built by Cys-563 and Cys-572. Transmembrane regions (helical) follow at residues 579-600 (AFYL…YWHW) and 647-669 (LAVW…MFLI). Chlorophyll a contacts are provided by His-658, Met-666, and Tyr-674. A phylloquinone-binding site is contributed by Trp-675. A helical transmembrane segment spans residues 711-731 (VVGLAHFTIGYILTYAAFLIA).

The protein belongs to the PsaA/PsaB family. The PsaA/B heterodimer binds the P700 chlorophyll special pair and subsequent electron acceptors. PSI consists of a core antenna complex that captures photons, and an electron transfer chain that converts photonic excitation into a charge separation. The cyanobacterial PSI reaction center is composed of one copy each of PsaA,B,C,D,E,F,I,J,K,L,M and X, and forms trimeric complexes. PSI electron transfer chain: 5 chlorophyll a, 1 chlorophyll a', 2 phylloquinones and 3 4Fe-4S clusters. PSI core antenna: 90 chlorophyll a, 22 carotenoids, 3 phospholipids and 1 galactolipid. P700 is a chlorophyll a/chlorophyll a' dimer, A0 is one or more chlorophyll a, A1 is one or both phylloquinones and FX is a shared 4Fe-4S iron-sulfur center. is required as a cofactor.

Its subcellular location is the cellular thylakoid membrane. It carries out the reaction reduced [plastocyanin] + hnu + oxidized [2Fe-2S]-[ferredoxin] = oxidized [plastocyanin] + reduced [2Fe-2S]-[ferredoxin]. Its function is as follows. PsaA and PsaB bind P700, the primary electron donor of photosystem I (PSI), as well as the electron acceptors A0, A1 and FX. PSI is a plastocyanin/cytochrome c6-ferredoxin oxidoreductase, converting photonic excitation into a charge separation, which transfers an electron from the donor P700 chlorophyll pair to the spectroscopically characterized acceptors A0, A1, FX, FA and FB in turn. Oxidized P700 is reduced on the lumenal side of the thylakoid membrane by plastocyanin or cytochrome c6. The sequence is that of Photosystem I P700 chlorophyll a apoprotein A2 from Synechococcus sp. (strain WH7803).